The sequence spans 207 residues: Outer-membrane lipoprotein LolB (207 aa).

The signal sequence occupies residues 1-21 (MPLPDFRLIRLLPLAALVLTA). Cys-22 carries the N-palmitoyl cysteine lipid modification. A lipid anchor (S-diacylglycerol cysteine) is attached at Cys-22.

This sequence belongs to the LolB family. In terms of assembly, monomer.

Its subcellular location is the cell outer membrane. Plays a critical role in the incorporation of lipoproteins in the outer membrane after they are released by the LolA protein. This Escherichia coli O7:K1 (strain IAI39 / ExPEC) protein is Outer-membrane lipoprotein LolB.